The sequence spans 943 residues: Zinc finger BED domain-containing protein 39 (943 aa).

The interval 1–99 (MSSVSSDIDG…DIAMDVSGST (99 aa)) is disordered. A compositionally biased stretch (basic and acidic residues) spans 12–21 (PETKRFRIDV). Residues 50–72 (SPAAPSSASYRSSNSSVISSSES) are compositionally biased toward low complexity. A compositionally biased stretch (basic and acidic residues) spans 73–85 (PIKDEDVDVHDGQ). The segment at 184–235 (NKQTPVWKYFVYNKTENLSRCIVGDCTYMLKGPHTSTLACHLKKHTREYSEF) adopts a BED-type; degenerate zinc-finger fold. 2 disordered regions span residues 242–315 (YSRT…KEPS) and 328–348 (RQATNNSNGSPPTTPHAPQLP). Over residues 262–276 (TLQTQNTPRQTGSPA) the composition is skewed to polar residues. Over residues 277 to 292 (STCNTNSNTSSSVSSG) the composition is skewed to low complexity. The span at 328–338 (RQATNNSNGSP) shows a compositional bias: polar residues.

As to expression, expressed in distal tip cells and in germline cells.

Its subcellular location is the nucleus. The protein localises to the cytoplasm. Its function is as follows. Regulates the timing and orientation of distal tip cell migration during gonadal development. May act in parallel to cacn-1 and Rac GTPases to control the anterior and posterior migration of distal tip cells. The sequence is that of Zinc finger BED domain-containing protein 39 from Caenorhabditis elegans.